Consider the following 583-residue polypeptide: Nuclear hormone receptor family member nhr-31 (583 aa).

A disordered region spans residues 43–77; sequence DLRTSGATSSSGPATSYIIRPSDKQPTVSSGGSQN. Residues 46 to 58 show a composition bias toward low complexity; that stretch reads TSGATSSSGPATS. The span at 66–77 shows a compositional bias: polar residues; sequence KQPTVSSGGSQN. The nuclear receptor DNA-binding region spans 79–154; the sequence is DSVCAVCGDG…AGMDPKAVRP (76 aa). 2 consecutive NR C4-type zinc fingers follow at residues 82 to 102 and 118 to 142; these read CAVC…CYGC and CRFS…FQRC. The 270-residue stretch at 195 to 464 folds into the NR LBD domain; it reads ETRILLMQLM…DNLLAEMFGD (270 aa).

It belongs to the nuclear hormone receptor family.

The protein localises to the nucleus. Its function is as follows. Orphan nuclear receptor. In Caenorhabditis elegans, this protein is Nuclear hormone receptor family member nhr-31 (nhr-31).